The following is a 372-amino-acid chain: Dual-specificity RNA methyltransferase RlmN (372 aa).

E94 (proton acceptor) is an active-site residue. Residues 100–339 (DGDRATLCVS…VTIRKTRGDD (240 aa)) enclose the Radical SAM core domain. A disulfide bond links C107 and C344. [4Fe-4S] cluster-binding residues include C114, C118, and C121. Residues 168–169 (GE), S200, 222–224 (SLH), and N301 contribute to the S-adenosyl-L-methionine site. C344 functions as the S-methylcysteine intermediate in the catalytic mechanism.

It belongs to the radical SAM superfamily. RlmN family. Requires [4Fe-4S] cluster as cofactor.

The protein resides in the cytoplasm. It carries out the reaction adenosine(2503) in 23S rRNA + 2 reduced [2Fe-2S]-[ferredoxin] + 2 S-adenosyl-L-methionine = 2-methyladenosine(2503) in 23S rRNA + 5'-deoxyadenosine + L-methionine + 2 oxidized [2Fe-2S]-[ferredoxin] + S-adenosyl-L-homocysteine. The catalysed reaction is adenosine(37) in tRNA + 2 reduced [2Fe-2S]-[ferredoxin] + 2 S-adenosyl-L-methionine = 2-methyladenosine(37) in tRNA + 5'-deoxyadenosine + L-methionine + 2 oxidized [2Fe-2S]-[ferredoxin] + S-adenosyl-L-homocysteine. In terms of biological role, specifically methylates position 2 of adenine 2503 in 23S rRNA and position 2 of adenine 37 in tRNAs. m2A2503 modification seems to play a crucial role in the proofreading step occurring at the peptidyl transferase center and thus would serve to optimize ribosomal fidelity. This chain is Dual-specificity RNA methyltransferase RlmN, found in Aliivibrio fischeri (strain MJ11) (Vibrio fischeri).